Here is a 359-residue protein sequence, read N- to C-terminus: DNA integrity scanning protein DisA (359 aa).

One can recognise a DAC domain in the interval 7–145 (DDIFRATLAA…AGRRYVLDGA (139 aa)). ATP contacts are provided by residues Gly-74, Leu-92, and 105–109 (TRHRT).

This sequence belongs to the DisA family. As to quaternary structure, homooctamer. The cofactor is Mg(2+).

It carries out the reaction 2 ATP = 3',3'-c-di-AMP + 2 diphosphate. Its function is as follows. Participates in a DNA-damage check-point that is active prior to asymmetric division when DNA is damaged. DisA forms globular foci that rapidly scan along the chromosomes during sporulation, searching for lesions. When a lesion is present, DisA pauses at the lesion site. This triggers a cellular response that culminates in a temporary block in sporulation initiation. Also has diadenylate cyclase activity, catalyzing the condensation of 2 ATP molecules into cyclic di-AMP (c-di-AMP). c-di-AMP acts as a signaling molecule that couples DNA integrity with progression of sporulation. The rise in c-di-AMP level generated by DisA while scanning the chromosome, operates as a positive signal that advances sporulation; upon encountering a lesion, the DisA focus arrests at the damaged site and halts c-di-AMP synthesis. The sequence is that of DNA integrity scanning protein DisA from Parafrankia sp. (strain EAN1pec).